The chain runs to 457 residues: tRNA-2-methylthio-N(6)-dimethylallyladenosine synthase (457 aa).

Positions 3–120 (KKVYVKTFGC…LPQMIDARRA (118 aa)) constitute an MTTase N-terminal domain. 6 residues coordinate [4Fe-4S] cluster: Cys-12, Cys-49, Cys-83, Cys-157, Cys-161, and Cys-164. Positions 143–377 (RVEGPSAFVS…QATIEENVAR (235 aa)) constitute a Radical SAM core domain. Residues 380–447 (QSMVGKVERI…PHSLRGELLL (68 aa)) enclose the TRAM domain.

It belongs to the methylthiotransferase family. MiaB subfamily. Monomer. [4Fe-4S] cluster is required as a cofactor.

It localises to the cytoplasm. The catalysed reaction is N(6)-dimethylallyladenosine(37) in tRNA + (sulfur carrier)-SH + AH2 + 2 S-adenosyl-L-methionine = 2-methylsulfanyl-N(6)-dimethylallyladenosine(37) in tRNA + (sulfur carrier)-H + 5'-deoxyadenosine + L-methionine + A + S-adenosyl-L-homocysteine + 2 H(+). Catalyzes the methylthiolation of N6-(dimethylallyl)adenosine (i(6)A), leading to the formation of 2-methylthio-N6-(dimethylallyl)adenosine (ms(2)i(6)A) at position 37 in tRNAs that read codons beginning with uridine. This Burkholderia vietnamiensis (strain G4 / LMG 22486) (Burkholderia cepacia (strain R1808)) protein is tRNA-2-methylthio-N(6)-dimethylallyladenosine synthase.